Consider the following 96-residue polypeptide: Large ribosomal subunit protein eL30 (96 aa).

Belongs to the eukaryotic ribosomal protein eL30 family.

This Methanosphaerula palustris (strain ATCC BAA-1556 / DSM 19958 / E1-9c) protein is Large ribosomal subunit protein eL30.